A 284-amino-acid chain; its full sequence is Bifunctional protein FolD (284 aa).

Residues 166–168 and Ile232 each bind NADP(+); that span reads GSS.

The protein belongs to the tetrahydrofolate dehydrogenase/cyclohydrolase family. Homodimer.

The enzyme catalyses (6R)-5,10-methylene-5,6,7,8-tetrahydrofolate + NADP(+) = (6R)-5,10-methenyltetrahydrofolate + NADPH. The catalysed reaction is (6R)-5,10-methenyltetrahydrofolate + H2O = (6R)-10-formyltetrahydrofolate + H(+). The protein operates within one-carbon metabolism; tetrahydrofolate interconversion. Functionally, catalyzes the oxidation of 5,10-methylenetetrahydrofolate to 5,10-methenyltetrahydrofolate and then the hydrolysis of 5,10-methenyltetrahydrofolate to 10-formyltetrahydrofolate. This Buchnera aphidicola subsp. Cinara cedri (strain Cc) protein is Bifunctional protein FolD.